The primary structure comprises 185 residues: Elongation factor P (185 aa).

It belongs to the elongation factor P family.

The protein resides in the cytoplasm. It participates in protein biosynthesis; polypeptide chain elongation. Involved in peptide bond synthesis. Stimulates efficient translation and peptide-bond synthesis on native or reconstituted 70S ribosomes in vitro. Probably functions indirectly by altering the affinity of the ribosome for aminoacyl-tRNA, thus increasing their reactivity as acceptors for peptidyl transferase. The protein is Elongation factor P of Gloeothece citriformis (strain PCC 7424) (Cyanothece sp. (strain PCC 7424)).